Consider the following 259-residue polypeptide: MDCVPSLFMPDSTYEDGLLFSDSFLLSPFISYQNNDVFHSITNKIGGSNKKRSLCDITYGANEANKNDDDRESKKMKHRDIERQRRQEVSSLFKRLRTLLPFQYIQGKRSTSDHIVQAVNYIKDLQIKIKELNEKRNRVKKVISATTTTHSAIEECTSSLSSSAASTLSSSCSCVGDKHITVVVTPCLVGVEIIISCCLGRNKSCLSSVLQMLAQEQRFSVVSCLSARRQQRFMHTIVSQVEDGKQINILELKDKIMTM.

One can recognise a bHLH domain in the interval 73–125 (SKKMKHRDIERQRRQEVSSLFKRLRTLLPFQYIQGKRSTSDHIVQAVNYIKDL).

Homodimer.

The protein resides in the nucleus. This chain is Transcription factor bHLH125 (BHLH125), found in Arabidopsis thaliana (Mouse-ear cress).